Reading from the N-terminus, the 319-residue chain is Ferrochelatase (319 aa).

Positions 193 and 274 each coordinate Fe cation.

The protein belongs to the ferrochelatase family.

It is found in the cytoplasm. It catalyses the reaction heme b + 2 H(+) = protoporphyrin IX + Fe(2+). It functions in the pathway porphyrin-containing compound metabolism; protoheme biosynthesis; protoheme from protoporphyrin-IX: step 1/1. In terms of biological role, catalyzes the ferrous insertion into protoporphyrin IX. The sequence is that of Ferrochelatase from Actinobacillus pleuropneumoniae serotype 3 (strain JL03).